Here is a 743-residue protein sequence, read N- to C-terminus: Fork head transcription factor 1 (743 aa).

The FHA domain occupies 39-94 (VTMGRKASNSSDCDVHLGDTKAISRQHAKIFYSFPNQRFEISVMGKNGAFVDGEFV). Disordered regions lie at residues 214–291 (QPPK…ATQK), 411–450 (GISA…LQNG), and 529–743 (QMQG…SSYT). The span at 221–230 (VSPSSIQRLS) shows a compositional bias: polar residues. The fork-head DNA-binding region spans 291–385 (KPNLSYANLI…EGNFFRRTKK (95 aa)). Over residues 434–443 (SRGENVEDRP) the composition is skewed to basic and acidic residues. The span at 529–539 (QMQGPQQVQQQ) shows a compositional bias: low complexity. Over residues 562-576 (NITSPSPSISVTQRP) the composition is skewed to polar residues. Positions 614–624 (SAGPSSVRSSS) are enriched in low complexity. Polar residues-rich tracts occupy residues 625–643 (YNST…QNLH), 670–686 (TGNQ…ASSF), and 695–726 (ENGS…NSSD).

It is found in the nucleus. Functionally, acts as a transcriptional activator for ribosomal protein genes (RPG) that contain a HomolE UAS (upstream activating sequence) in addition to a HomolD promoter element; HomolD plays the role of a TATA box in RPG promoters that do not contain a canonical TATA sequence. Binds to HomolE elements with consensus sequence 3'-ACCCTACCCT-5' (or its inverted form AGGGTAGGGT). The sequence is that of Fork head transcription factor 1 from Schizosaccharomyces pombe (strain 972 / ATCC 24843) (Fission yeast).